Here is a 236-residue protein sequence, read N- to C-terminus: UPF0257 lipoprotein YnfC (236 aa).

The first 16 residues, 1 to 16 (MKYKLLPCLLAIFLTG), serve as a signal peptide directing secretion. Cys17 carries N-palmitoyl cysteine lipidation. Residue Cys17 is the site of S-diacylglycerol cysteine attachment.

Belongs to the UPF0257 family.

It is found in the cell membrane. The protein is UPF0257 lipoprotein YnfC of Escherichia coli O7:K1 (strain IAI39 / ExPEC).